Consider the following 150-residue polypeptide: UPF0178 protein Ssed_1350 (150 aa).

The protein belongs to the UPF0178 family.

The sequence is that of UPF0178 protein Ssed_1350 from Shewanella sediminis (strain HAW-EB3).